A 537-amino-acid chain; its full sequence is CTP synthase (537 aa).

The segment at 1–267 (MTKYIFVTGG…DQIVCDHLKL (267 aa)) is amidoligase domain. Ser13 is a binding site for CTP. Position 13 (Ser13) interacts with UTP. Position 14 to 19 (14 to 19 (SIGKGI)) interacts with ATP. Residue Tyr54 participates in L-glutamine binding. Asp71 provides a ligand contact to ATP. Mg(2+) contacts are provided by Asp71 and Glu141. CTP-binding positions include 148–150 (DIE), 188–193 (KTKPTQ), and Lys224. UTP is bound by residues 188–193 (KTKPTQ) and Lys224. Position 240 to 242 (240 to 242 (RDV)) interacts with ATP. In terms of domain architecture, Glutamine amidotransferase type-1 spans 292–535 (RIALVGKYVE…VTAAVKNKNQ (244 aa)). Gly354 provides a ligand contact to L-glutamine. Catalysis depends on Cys381, which acts as the Nucleophile; for glutamine hydrolysis. L-glutamine contacts are provided by residues 382 to 385 (LGMQ), Glu405, and Arg463. Active-site residues include His508 and Glu510.

This sequence belongs to the CTP synthase family. As to quaternary structure, homotetramer.

It catalyses the reaction UTP + L-glutamine + ATP + H2O = CTP + L-glutamate + ADP + phosphate + 2 H(+). The enzyme catalyses L-glutamine + H2O = L-glutamate + NH4(+). It carries out the reaction UTP + NH4(+) + ATP = CTP + ADP + phosphate + 2 H(+). It functions in the pathway pyrimidine metabolism; CTP biosynthesis via de novo pathway; CTP from UDP: step 2/2. With respect to regulation, allosterically activated by GTP, when glutamine is the substrate; GTP has no effect on the reaction when ammonia is the substrate. The allosteric effector GTP functions by stabilizing the protein conformation that binds the tetrahedral intermediate(s) formed during glutamine hydrolysis. Inhibited by the product CTP, via allosteric rather than competitive inhibition. Functionally, catalyzes the ATP-dependent amination of UTP to CTP with either L-glutamine or ammonia as the source of nitrogen. Regulates intracellular CTP levels through interactions with the four ribonucleotide triphosphates. The chain is CTP synthase from Streptococcus equi subsp. zooepidemicus (strain H70).